An 876-amino-acid polypeptide reads, in one-letter code: Leucine--tRNA ligase (876 aa).

The short motif at 42-52 (PYPSGKLHMGH) is the 'HIGH' region element. Residues 634-638 (KMSKS) carry the 'KMSKS' region motif. Lysine 637 is an ATP binding site.

It belongs to the class-I aminoacyl-tRNA synthetase family.

The protein localises to the cytoplasm. The enzyme catalyses tRNA(Leu) + L-leucine + ATP = L-leucyl-tRNA(Leu) + AMP + diphosphate. The polypeptide is Leucine--tRNA ligase (Neisseria meningitidis serogroup B (strain ATCC BAA-335 / MC58)).